A 560-amino-acid chain; its full sequence is Mannosyl-oligosaccharide 1,2-alpha-mannosidase MNS1 (560 aa).

Residues methionine 1–arginine 27 lie on the Cytoplasmic side of the membrane. The helical; Signal-anchor for type II membrane protein transmembrane segment at leucine 28–asparagine 47 threads the bilayer. A coiled-coil region spans residues asparagine 47–lysine 80. The Lumenal segment spans residues leucine 48–valine 560. The active-site Proton donor is glutamate 179. Residue aspartate 312 is part of the active site. An N-linked (GlcNAc...) asparagine glycan is attached at asparagine 326. Cysteine 377 and cysteine 409 are oxidised to a cystine. Glutamate 423 serves as the catalytic Proton donor. Residue glutamate 445 is part of the active site. N-linked (GlcNAc...) asparagine glycosylation occurs at asparagine 459. Threonine 529 serves as a coordination point for Ca(2+).

The protein belongs to the glycosyl hydrolase 47 family. Ca(2+) serves as cofactor. Mn(2+) is required as a cofactor. It depends on Mg(2+) as a cofactor. As to expression, expressed in flowers, siliques, stems, leaves, roots, pollen grains, shoot apical meristems, hypocotyls and upper region of the root.

It is found in the golgi apparatus membrane. The catalysed reaction is N(4)-(alpha-D-Man-(1-&gt;2)-alpha-D-Man-(1-&gt;2)-alpha-D-Man-(1-&gt;3)-[alpha-D-Man-(1-&gt;2)-alpha-D-Man-(1-&gt;3)-[alpha-D-Man-(1-&gt;2)-alpha-D-Man-(1-&gt;6)]-alpha-D-Man-(1-&gt;6)]-beta-D-Man-(1-&gt;4)-beta-D-GlcNAc-(1-&gt;4)-beta-D-GlcNAc)-L-asparaginyl-[protein] (N-glucan mannose isomer 9A1,2,3B1,2,3) + 4 H2O = N(4)-(alpha-D-Man-(1-&gt;3)-[alpha-D-Man-(1-&gt;3)-[alpha-D-Man-(1-&gt;6)]-alpha-D-Man-(1-&gt;6)]-beta-D-Man-(1-&gt;4)-beta-D-GlcNAc-(1-&gt;4)-beta-D-GlcNAc)-L-asparaginyl-[protein] (N-glucan mannose isomer 5A1,2) + 4 beta-D-mannose. It carries out the reaction N(4)-(alpha-D-Man-(1-&gt;2)-alpha-D-Man-(1-&gt;2)-alpha-D-Man-(1-&gt;3)-[alpha-D-Man-(1-&gt;3)-[alpha-D-Man-(1-&gt;2)-alpha-D-Man-(1-&gt;6)]-alpha-D-Man-(1-&gt;6)]-beta-D-Man-(1-&gt;4)-beta-D-GlcNAc-(1-&gt;4)-beta-D-GlcNAc)-L-asparaginyl-[protein] (N-glucan mannose isomer 8A1,2,3B1,3) + 3 H2O = N(4)-(alpha-D-Man-(1-&gt;3)-[alpha-D-Man-(1-&gt;3)-[alpha-D-Man-(1-&gt;6)]-alpha-D-Man-(1-&gt;6)]-beta-D-Man-(1-&gt;4)-beta-D-GlcNAc-(1-&gt;4)-beta-D-GlcNAc)-L-asparaginyl-[protein] (N-glucan mannose isomer 5A1,2) + 3 beta-D-mannose. It catalyses the reaction N(4)-(alpha-D-Man-(1-&gt;2)-alpha-D-Man-(1-&gt;2)-alpha-D-Man-(1-&gt;3)-[alpha-D-Man-(1-&gt;2)-alpha-D-Man-(1-&gt;3)-[alpha-D-Man-(1-&gt;2)-alpha-D-Man-(1-&gt;6)]-alpha-D-Man-(1-&gt;6)]-beta-D-Man-(1-&gt;4)-beta-D-GlcNAc-(1-&gt;4)-beta-D-GlcNAc)-L-asparaginyl-[protein] (N-glucan mannose isomer 9A1,2,3B1,2,3) + H2O = N(4)-(alpha-D-Man-(1-&gt;2)-alpha-D-Man-(1-&gt;2)-alpha-D-Man-(1-&gt;3)-[alpha-D-Man-(1-&gt;3)-[alpha-D-Man-(1-&gt;2)-alpha-D-Man-(1-&gt;6)]-alpha-D-Man-(1-&gt;6)]-beta-D-Man-(1-&gt;4)-beta-D-GlcNAc-(1-&gt;4)-beta-D-GlcNAc)-L-asparaginyl-[protein] (N-glucan mannose isomer 8A1,2,3B1,3) + beta-D-mannose. It participates in protein modification; protein glycosylation. With respect to regulation, inhibited by kifunensine and 1-deoxymannojirimycin, but not by swainsonine. Functionally, class I alpha-mannosidase essential for early N-glycan processing. Progressively trims alpha-1,2-linked mannose residues. Produces Man(5)GlcNAc(2) from Man(8)GlcNAc(2), but only Man(6)GlcNAc(2) from Man(9)GlcNAc(2). Has difficulty acting on the terminal mannose of the b-branch. Involved in root development and cell wall biosynthesis. The polypeptide is Mannosyl-oligosaccharide 1,2-alpha-mannosidase MNS1 (MNS1) (Arabidopsis thaliana (Mouse-ear cress)).